Consider the following 295-residue polypeptide: UDP-N-acetylenolpyruvoylglucosamine reductase (295 aa).

In terms of domain architecture, FAD-binding PCMH-type spans Lys24–Gly188. The active site involves Arg168. The Proton donor role is filled by Ser217. Residue Glu287 is part of the active site.

Belongs to the MurB family. FAD serves as cofactor.

It localises to the cytoplasm. The catalysed reaction is UDP-N-acetyl-alpha-D-muramate + NADP(+) = UDP-N-acetyl-3-O-(1-carboxyvinyl)-alpha-D-glucosamine + NADPH + H(+). It participates in cell wall biogenesis; peptidoglycan biosynthesis. Its function is as follows. Cell wall formation. This is UDP-N-acetylenolpyruvoylglucosamine reductase from Rickettsia typhi (strain ATCC VR-144 / Wilmington).